We begin with the raw amino-acid sequence, 502 residues long: UTP--glucose-1-phosphate uridylyltransferase 2 (502 aa).

The segment at 1–20 (MMKPDLNSPLPQSPQLQAFG) is disordered. Residues 9–20 (PLPQSPQLQAFG) are compositionally biased toward polar residues. UTP is bound by residues 114–117 (LNGG), K128, Q191, and G220. 116–117 (GG) provides a ligand contact to substrate. Residues H221 and 249–251 (NVD) each bind substrate. UTP-binding residues include D251 and K390.

This sequence belongs to the UDPGP type 1 family.

It catalyses the reaction alpha-D-glucose 1-phosphate + UTP + H(+) = UDP-alpha-D-glucose + diphosphate. Functionally, plays a central role as a glucosyl donor in cellular metabolic pathways. The chain is UTP--glucose-1-phosphate uridylyltransferase 2 (ugpB) from Dictyostelium discoideum (Social amoeba).